The sequence spans 477 residues: AAA-ATPase At3g28600 (477 aa).

Residues 1-26 (MMMGNTFGSSLASLFFLWATIQQIFP) form the signal peptide. 245-252 (GPPGTGKS) is an ATP binding site.

It belongs to the AAA ATPase family. BCS1 subfamily. Mg(2+) serves as cofactor.

It carries out the reaction ATP + H2O = ADP + phosphate + H(+). This is AAA-ATPase At3g28600 from Arabidopsis thaliana (Mouse-ear cress).